The primary structure comprises 182 residues: Small ribosomal subunit protein uS5 (182 aa).

An S5 DRBM domain is found at 16–79 (FVDRLVHINR…ESAKRGMIYV (64 aa)).

The protein belongs to the universal ribosomal protein uS5 family. As to quaternary structure, part of the 30S ribosomal subunit. Contacts proteins S4 and S8.

Its function is as follows. With S4 and S12 plays an important role in translational accuracy. Located at the back of the 30S subunit body where it stabilizes the conformation of the head with respect to the body. The chain is Small ribosomal subunit protein uS5 from Bartonella tribocorum (strain CIP 105476 / IBS 506).